The sequence spans 208 residues: Large ribosomal subunit protein bL9 (208 aa).

Residues G168 to E208 form a disordered region. Residues N188–S197 are compositionally biased toward polar residues. Basic and acidic residues predominate over residues E199–E208.

It belongs to the bacterial ribosomal protein bL9 family.

Binds to the 23S rRNA. The polypeptide is Large ribosomal subunit protein bL9 (Ehrlichia chaffeensis (strain ATCC CRL-10679 / Arkansas)).